A 620-amino-acid polypeptide reads, in one-letter code: Glutathione-regulated potassium-efflux system protein KefC (620 aa).

At 1–3 (MDS) the chain is on the periplasmic side. The helical transmembrane segment at 4-24 (HTLLQALIYLGSAALIVPIAV) threads the bilayer. A topological domain (cytoplasmic) is located at residue arginine 25. Residues 26–46 (LGLGSVLGYLIAGCIIGPWGL) form a helical membrane-spanning segment. The Periplasmic portion of the chain corresponds to 47-53 (RLVTDAE). Residues 54 to 74 (SILHFAEIGVVLMLFVIGLEL) traverse the membrane as a helical segment. At 75–89 (DPQRLWKLRASVFGG) the chain is on the cytoplasmic side. Residues 90-110 (GALQMVVCGGLIGLFCMFLGL) traverse the membrane as a helical segment. The Periplasmic segment spans residues 111–113 (RWQ). Residues 114–134 (VAELIGMTLALSSTAIAMQAM) form a helical membrane-spanning segment. Topologically, residues 135 to 148 (NERNLTVSQVGRSA) are cytoplasmic. The chain crosses the membrane as a helical span at residues 149 to 169 (FAVLLFQDIAAIPLVAMIPLL). Topologically, residues 170-177 (AASGASTT) are periplasmic. A helical transmembrane segment spans residues 178–198 (LGAFALSALKVAGALALVVLL). The Cytoplasmic portion of the chain corresponds to 199-213 (GRYVTRPALRFVARS). A helical transmembrane segment spans residues 214-233 (GLREVFSAVALFLVFGFGLL). Over 234–236 (LEE) the chain is Periplasmic. A helical membrane pass occupies residues 237–254 (VGLSMAMGAFLAGVLLAS). At 255–269 (SEYRHALESDIEPFK) the chain is on the cytoplasmic side. Residues 270 to 290 (GLLLGLFFIGVGMSIDFGTLV) form a helical membrane-spanning segment. At 291–293 (ENP) the chain is on the periplasmic side. Residues 294–314 (LRILLLLAGFLAIKIVMLWLV) traverse the membrane as a helical segment. Topologically, residues 315–326 (ARTLGVPAKQRR) are cytoplasmic. A helical transmembrane segment spans residues 327-347 (WFAVLLGQGSEFAFVVFGAAQ). Topologically, residues 348-358 (MADVLEPEWAK) are periplasmic. The chain crosses the membrane as a helical span at residues 359 to 379 (ALTLAVALSMAATPIFLVLLT). The Cytoplasmic portion of the chain corresponds to 380 to 620 (RMEKTATGEA…ADEPEVKPSI (241 aa)). Residues 399 to 518 (QPRVIVAGFG…AGVAMPERET (120 aa)) enclose the RCK N-terminal domain. A disordered region spans residues 599 to 620 (QGTAEGKHSGKAADEPEVKPSI). Over residues 603–620 (EGKHSGKAADEPEVKPSI) the composition is skewed to basic and acidic residues.

The protein belongs to the monovalent cation:proton antiporter 2 (CPA2) transporter (TC 2.A.37) family. KefC subfamily. In terms of assembly, homodimer. Interacts with the regulatory subunit KefF.

It is found in the cell inner membrane. Its function is as follows. Pore-forming subunit of a potassium efflux system that confers protection against electrophiles. Catalyzes K(+)/H(+) antiport. The protein is Glutathione-regulated potassium-efflux system protein KefC of Salmonella typhi.